A 105-amino-acid polypeptide reads, in one-letter code: Nucleoid-associated protein TTHA1599 (105 aa).

Belongs to the YbaB/EbfC family. In terms of assembly, homodimer.

Its subcellular location is the cytoplasm. It localises to the nucleoid. Functionally, binds to DNA and alters its conformation. May be involved in regulation of gene expression, nucleoid organization and DNA protection. The protein is Nucleoid-associated protein TTHA1599 of Thermus thermophilus (strain ATCC 27634 / DSM 579 / HB8).